The chain runs to 120 residues: uncharacterized protein (120 aa).

Transmembrane regions (helical) follow at residues 8–28 (PFVT…CTLV) and 55–75 (FLEN…IGIL).

It localises to the membrane. This is an uncharacterized protein from Saccharomyces cerevisiae (strain ATCC 204508 / S288c) (Baker's yeast).